Reading from the N-terminus, the 495-residue chain is UDP-N-acetylmuramate--L-alanine ligase (495 aa).

An ATP-binding site is contributed by 120-126; sequence GSHGKTT.

The protein belongs to the MurCDEF family.

The protein localises to the cytoplasm. It catalyses the reaction UDP-N-acetyl-alpha-D-muramate + L-alanine + ATP = UDP-N-acetyl-alpha-D-muramoyl-L-alanine + ADP + phosphate + H(+). It participates in cell wall biogenesis; peptidoglycan biosynthesis. Cell wall formation. This Rickettsia prowazekii (strain Madrid E) protein is UDP-N-acetylmuramate--L-alanine ligase.